The following is a 329-amino-acid chain: Biotin synthase (329 aa).

A Radical SAM core domain is found at 38–262 (NTIQVSTLLS…IMPHSYIRLS (225 aa)). [4Fe-4S] cluster-binding residues include cysteine 53, cysteine 57, and cysteine 60. Cysteine 97, cysteine 128, cysteine 188, and arginine 260 together coordinate [2Fe-2S] cluster.

This sequence belongs to the radical SAM superfamily. Biotin synthase family. Homodimer. [4Fe-4S] cluster is required as a cofactor. Requires [2Fe-2S] cluster as cofactor.

The enzyme catalyses (4R,5S)-dethiobiotin + (sulfur carrier)-SH + 2 reduced [2Fe-2S]-[ferredoxin] + 2 S-adenosyl-L-methionine = (sulfur carrier)-H + biotin + 2 5'-deoxyadenosine + 2 L-methionine + 2 oxidized [2Fe-2S]-[ferredoxin]. Its pathway is cofactor biosynthesis; biotin biosynthesis; biotin from 7,8-diaminononanoate: step 2/2. Its function is as follows. Catalyzes the conversion of dethiobiotin (DTB) to biotin by the insertion of a sulfur atom into dethiobiotin via a radical-based mechanism. This is Biotin synthase from Acinetobacter baumannii (strain ACICU).